The following is a 278-amino-acid chain: MGPANSEGTMFDAFSREVGDYYDQANELLRAMFTDNVHYGYWPDPSSIDPLAEAGERMTEQLYERLDVSAGHKVLDVGCGVGKPAAWLARKTGATVKGANVSRNQLEVARDRVRSEGLEDRVSFDLADAMHLPYADDSFDRIWAIESMIHMPDRDQVMREMARVLRPGGRLAIADIVVRGTLDDVATAVVEGFCTLSTARSLEHIDNYPALVEKAGLDLLELTDVSEQTRPTGPAVLPAFDVLLPTLGEEGVAQSKKAWGDMFDLPQYGYVLLTAGKP.

Residues Gln-105 and 128-129 contribute to the S-adenosyl-L-methionine site; that span reads DA. Catalysis depends on Glu-146, which acts as the Proton acceptor. His-150 serves as a coordination point for S-adenosyl-L-methionine.

The protein belongs to the methyltransferase superfamily.

It functions in the pathway antibiotic biosynthesis. In terms of biological role, methylase required for synthesis of the 16-membered macrolide antibiotics FD-891 and FD-892. In vitro uses S-adenosyl-L-methionine to methylate a number of biosynthetic intermediates in the synthesis of FD-891. The chain is Methyltransferase GfsG from Streptomyces halstedii.